The sequence spans 593 residues: UvrABC system protein C (593 aa).

Residues 17-94 (MEPGCYLMKD…IKQYQPRYNI (78 aa)) enclose the GIY-YIG domain. A UVR domain is found at 199-234 (KTILKSLEERMLTASESLDFERAKEYRDLIQHIQNL).

It belongs to the UvrC family. As to quaternary structure, interacts with UvrB in an incision complex.

It localises to the cytoplasm. In terms of biological role, the UvrABC repair system catalyzes the recognition and processing of DNA lesions. UvrC both incises the 5' and 3' sides of the lesion. The N-terminal half is responsible for the 3' incision and the C-terminal half is responsible for the 5' incision. This chain is UvrABC system protein C, found in Staphylococcus aureus (strain MRSA252).